The chain runs to 342 residues: Heat-inducible transcription repressor HrcA (342 aa).

This sequence belongs to the HrcA family.

Its function is as follows. Negative regulator of class I heat shock genes (grpE-dnaK-dnaJ and groELS operons). Prevents heat-shock induction of these operons. In Oceanobacillus iheyensis (strain DSM 14371 / CIP 107618 / JCM 11309 / KCTC 3954 / HTE831), this protein is Heat-inducible transcription repressor HrcA.